Here is a 342-residue protein sequence, read N- to C-terminus: Nicotinate-nucleotide--dimethylbenzimidazole phosphoribosyltransferase (342 aa).

E311 (proton acceptor) is an active-site residue.

The protein belongs to the CobT family.

The catalysed reaction is 5,6-dimethylbenzimidazole + nicotinate beta-D-ribonucleotide = alpha-ribazole 5'-phosphate + nicotinate + H(+). Its pathway is nucleoside biosynthesis; alpha-ribazole biosynthesis; alpha-ribazole from 5,6-dimethylbenzimidazole: step 1/2. In terms of biological role, catalyzes the synthesis of alpha-ribazole-5'-phosphate from nicotinate mononucleotide (NAMN) and 5,6-dimethylbenzimidazole (DMB). In Shewanella sediminis (strain HAW-EB3), this protein is Nicotinate-nucleotide--dimethylbenzimidazole phosphoribosyltransferase.